The sequence spans 467 residues: Putative pentatricopeptide repeat-containing protein At1g10330 (467 aa).

10 PPR repeats span residues 50–84, 85–119, 120–150, 151–181, 182–216, 220–256, 257–287, 288–322, 323–358, and 359–389; these read TKCVYNTLIRSYLTTGEYKTSLALFTHMLASHVQP, NNLTFPSLIKAACSSFSVSYGVALHGQALKRGFLW, DPFVQTSFVRFYGEVGDLESSRKMFDDILNP, CVVACNSLLDACGRNGEMDYAFEYFQRMPVT, DVVSWTTVINGFSKKGLHAKALMVFGEMIQNERAV, NEATFVSVLSSCANFDQGGIRLGKQIHGYVMSKEIIL, TTTLGTALLDMYGKAGDLEMALTIFDQIRDK, KVCAWNAIISALASNGRPKQALEMFEMMKSSYVHP, NGITLLAILTACARSKLVDLGIQLFSSICSEYKIIP, and TSEHYGCVVDLIGRAGLLVDAANFIQSLPFE. The tract at residues 394-467 is type E motif; degenerate; it reads VLGALLGACK…RKIPAYSVLT (74 aa).

The protein belongs to the PPR family. PCMP-E subfamily.

The chain is Putative pentatricopeptide repeat-containing protein At1g10330 (PCMP-E71) from Arabidopsis thaliana (Mouse-ear cress).